A 563-amino-acid polypeptide reads, in one-letter code: Glucocorticoid modulatory element-binding protein 1 (563 aa).

An N-acetylalanine modification is found at Ala2. The SAND domain occupies 72 to 156 (ASTIEANEDM…RKMMDSGQID (85 aa)). Cys103 is a Zn(2+) binding site. Positions 129, 133, 136, and 147 each coordinate DNA. Zn(2+) is bound by residues His160, Cys164, and Cys168. Residues 304 to 355 (MDTVKKVLDNRKNQVEQGEEQFLYTLTDLERQLEEQKKQAQDHRLKSQTVQN) adopt a coiled-coil conformation. The interval 360–385 (PVSTPKPPKRPRLQRPASTTVLSPSP) is disordered.

As to quaternary structure, homodimer, and heterodimer of GMEB1 and GMEB2. Interacts with TRIM63. Interacts with the glucocorticoid receptor (NR3C1) and NCOA2/TIF2. May interact with HSP27 and CREB-binding protein (CBP).

Its subcellular location is the nucleus. It localises to the cytoplasm. Functionally, trans-acting factor that binds to glucocorticoid modulatory elements (GME) present in the TAT (tyrosine aminotransferase) promoter and increases sensitivity to low concentrations of glucocorticoids. Also binds to the transferrin receptor promoter. This Bos taurus (Bovine) protein is Glucocorticoid modulatory element-binding protein 1 (GMEB1).